The following is a 126-amino-acid chain: Protein HEAT-INDUCED TAS1 TARGET 3 (126 aa).

Belongs to the heat induced plant HTT protein family. As to expression, expressed in seedlings, leaves, stems, inflorescences and siliques.

It is found in the cytoplasm. The protein resides in the nucleus. In terms of biological role, mediates both basal and acquired thermotolerance. This chain is Protein HEAT-INDUCED TAS1 TARGET 3, found in Arabidopsis thaliana (Mouse-ear cress).